Reading from the N-terminus, the 202-residue chain is Syndecan-2 (202 aa).

An N-terminal signal peptide occupies residues 1-18; it reads MQRAWILLTLGLMACVSA. Topologically, residues 19–145 are extracellular; the sequence is ETRTELTSDK…HSDNLFKRTE (127 aa). O-linked (Xyl...) (glycosaminoglycan) serine glycosylation is found at S41, S55, and S57. Disordered regions lie at residues 41 to 63 and 88 to 118; these read SGVYPIDDDDYSSASGSGADEDI and ETMTLKTQSITPAQTESPEETDKEEVDISEA. Residues 91–103 are compositionally biased toward polar residues; it reads TLKTQSITPAQTE. Residues 104 to 117 show a composition bias toward acidic residues; the sequence is SPEETDKEEVDISE. Phosphoserine is present on S116. The chain crosses the membrane as a helical span at residues 146 to 170; it reads VLAAVIAGGVIGFLFAIFLILLLVY. The Cytoplasmic segment spans residues 171–202; the sequence is RMRKKDEGSYDLGERKPSSAAYQKAPTKEFYA. Residues 179-202 are disordered; it reads SYDLGERKPSSAAYQKAPTKEFYA. S188 carries the post-translational modification Phosphoserine.

The protein belongs to the syndecan proteoglycan family. Interacts (via cytoplasmic domain) with SARM1. Forms a complex with SDCBP and PDCD6IP. In terms of processing, O-glycosylated; contains both heparan sulfate and chondroitin sulfate. Phosphorylated on serine residues. As to expression, preferential expression in cells of mesenchymal origin.

Its subcellular location is the membrane. Its function is as follows. Cell surface proteoglycan which regulates dendritic arbor morphogenesis. The sequence is that of Syndecan-2 (Sdc2) from Mus musculus (Mouse).